The chain runs to 477 residues: MVRVRLAPSPTGTLHIGTARTAVFNWLYARRQQGSFLLRIEDTDKERSKPEYTQNILEGLRWLGIDWDEEPLIQSEQVQQHRAAIETLLQKGLAYRCYANEAELDAMREAQKASNQAPRYDNRHRNLTPEQEAAFQSEGREAVIRFRIDDNAEIRWNDMVRGAMSWRGADLGGDMVVARRAPADQIGDPLYNLVVVVDDAAMAISHVIRGEDHIANTAKQLLLYEALDLPAPTFAHAPLILNAEGRKLSKRDGVTSINDFRTMGYTAEAIANYMTLLGWSVPEGMEERFTLPEAAAVFSFDRVNKAGARFDWDKLNWLNGQVLHALPAQQLLDDLRPLWAEQGWTLPDDSSWGLELCELLGPSLTLLKEGVEQATPFFKCPDLEDDGVRQLEADGARTAVAQLLQILEAEPWDGKDTDRAKQLLADAAKGAGVKKGVVMKSLRAALLGRLQGPDLITTWCLLARIGEDLPRLQRCLA.

A 'HIGH' region motif is present at residues 8–18; it reads PSPTGTLHIGT. Residues 247–251 carry the 'KMSKS' region motif; it reads KLSKR. An ATP-binding site is contributed by Lys-250.

This sequence belongs to the class-I aminoacyl-tRNA synthetase family. Glutamate--tRNA ligase type 1 subfamily. Monomer.

Its subcellular location is the cytoplasm. The enzyme catalyses tRNA(Glu) + L-glutamate + ATP = L-glutamyl-tRNA(Glu) + AMP + diphosphate. Catalyzes the attachment of glutamate to tRNA(Glu) in a two-step reaction: glutamate is first activated by ATP to form Glu-AMP and then transferred to the acceptor end of tRNA(Glu). The protein is Glutamate--tRNA ligase of Parasynechococcus marenigrum (strain WH8102).